The primary structure comprises 499 residues: Putative DUF21 domain-containing protein At1g03270 (499 aa).

Over 1–32 the chain is Extracellular; that stretch reads MVVLSTLALVRAAYSLNSFVFEAEDIRFGSPW. The 183-residue stretch at 29–211 folds into the CNNM transmembrane domain; sequence GSPWWFVVVG…GKGGELTHEE (183 aa). The helical transmembrane segment at 33–53 threads the bilayer; it reads WFVVVGVACFLVLFAGIMSGL. Over 54–91 the chain is Cytoplasmic; the sequence is TLGLMSLGLVELEILQQSGSSAEKKQAAAILPVVKKQH. The chain crosses the membrane as a helical span at residues 92–112; that stretch reads QLLVTLLLCNAAAMEALPICL. Over 113–114 the chain is Extracellular; it reads DK. The chain crosses the membrane as a helical span at residues 115 to 135; the sequence is IFHPFVAVLLSVTFVLAFGEI. The Cytoplasmic segment spans residues 136-145; it reads IPQAICSRYG. Residues 146–166 form a helical membrane-spanning segment; the sequence is LAVGANFLWLVRILMIICYPI. Residues 167–499 lie on the Extracellular side of the membrane; it reads AYPIGKVLDA…TEPLLAESDR (333 aa). Residue N181 is glycosylated (N-linked (GlcNAc...) asparagine). 3 CBS domains span residues 230–291, 295–359, and 365–431; these read MTPI…EAPV, SIRK…SNLT, and HESH…IVDE. N-linked (GlcNAc...) asparagine glycans are attached at residues N357, N391, and N484.

The protein localises to the membrane. This Arabidopsis thaliana (Mouse-ear cress) protein is Putative DUF21 domain-containing protein At1g03270 (CBSDUF4).